The sequence spans 273 residues: Zinc finger protein 80 (273 aa).

2 consecutive C2H2-type zinc fingers follow at residues 49 to 71 (YKCK…HQIH) and 77 to 99 (YECQ…MRIH). The segment at 105–127 (CKCVECGKVFNRRSHLLCYRQIH) adopts a C2H2-type 3; atypical zinc-finger fold. C2H2-type zinc fingers lie at residues 133 to 155 (YECS…RMTH), 161 to 183 (FGCK…MKIH), 189 to 211 (YKCG…SMTH), and 217 to 239 (YECK…TRSH).

Belongs to the krueppel C2H2-type zinc-finger protein family.

The protein localises to the nucleus. Functionally, may be involved in transcriptional regulation. The chain is Zinc finger protein 80 (ZNF80) from Gorilla gorilla gorilla (Western lowland gorilla).